We begin with the raw amino-acid sequence, 337 residues long: Phenylalanine--tRNA ligase alpha subunit (337 aa).

Mg(2+) is bound at residue Glu-252.

The protein belongs to the class-II aminoacyl-tRNA synthetase family. Phe-tRNA synthetase alpha subunit type 1 subfamily. In terms of assembly, tetramer of two alpha and two beta subunits. Requires Mg(2+) as cofactor.

The protein localises to the cytoplasm. It catalyses the reaction tRNA(Phe) + L-phenylalanine + ATP = L-phenylalanyl-tRNA(Phe) + AMP + diphosphate + H(+). The chain is Phenylalanine--tRNA ligase alpha subunit from Cellvibrio japonicus (strain Ueda107) (Pseudomonas fluorescens subsp. cellulosa).